Here is a 90-residue protein sequence, read N- to C-terminus: Small ribosomal subunit protein bS16 (90 aa).

It belongs to the bacterial ribosomal protein bS16 family.

The polypeptide is Small ribosomal subunit protein bS16 (Moorella thermoacetica (strain ATCC 39073 / JCM 9320)).